A 173-amino-acid polypeptide reads, in one-letter code: Shikimate kinase (173 aa).

14-19 (GAGKST) lines the ATP pocket. Mg(2+) is bound at residue S18. D36, R60, and G82 together coordinate substrate. R120 lines the ATP pocket. R140 provides a ligand contact to substrate. Q157 lines the ATP pocket.

This sequence belongs to the shikimate kinase family. As to quaternary structure, monomer. Mg(2+) serves as cofactor.

The protein localises to the cytoplasm. It catalyses the reaction shikimate + ATP = 3-phosphoshikimate + ADP + H(+). The protein operates within metabolic intermediate biosynthesis; chorismate biosynthesis; chorismate from D-erythrose 4-phosphate and phosphoenolpyruvate: step 5/7. Functionally, catalyzes the specific phosphorylation of the 3-hydroxyl group of shikimic acid using ATP as a cosubstrate. The chain is Shikimate kinase from Baumannia cicadellinicola subsp. Homalodisca coagulata.